An 842-amino-acid chain; its full sequence is Axin-1 (842 aa).

The segment at 1–75 is disordered; the sequence is MSVKGKGFPL…LDLGYEPEGS (75 aa). A compositionally biased stretch (polar residues) spans 34-46; that stretch reads TTDQRPFSHTYYS. Residues 88-211 enclose the RGS domain; sequence SLHSLLDDQD…LKSDIYLEYT (124 aa). 9 disordered regions span residues 218-242, 277-297, 316-344, 414-451, 482-532, 543-562, 615-637, 656-675, and 729-754; these read PKNY…PTLN, SHCA…PGTW, TSAN…DGIP, KRVR…NSRY, KTPG…AKVD, YHHV…DGES, KKAD…EDSE, HKKS…TELA, and RLEE…KNVS. A compositionally biased stretch (polar residues) spans 316–339; the sequence is TSANDSEQQSMSSDADTMSLTDSS. The interval 348–433 is interaction with GSK3B; that stretch reads LRKHYRREMQ…DGDVSSGPSV (86 aa). The segment at 434–508 is interaction with beta-catenin; that stretch reads ISHKLPSGPP…RSPDGHLSKT (75 aa). The span at 543–552 shows a compositional bias: basic residues; sequence YHHVHHHGGV. Basic and acidic residues predominate over residues 615-626; sequence KKADLGKSESAS. In terms of domain architecture, DIX spans 760 to 842; it reads CDNIVVAYYF…KIIGQVEKID (83 aa).

As to quaternary structure, homodimer. Interacts with hwa; leading to promote the tankyrase-mediated degradation of axin1. ADP-ribosylated by tankyrase tnks and tnks2. Poly-ADP-ribosylated protein is recognized by rnf146, followed by ubiquitination at 'Lys-48' and subsequent activation of the Wnt signaling pathway. Post-translationally, ubiquitinated by rnf146 when poly-ADP-ribosylated, leading to its degradation and subsequent activation of the Wnt signaling pathway.

Its subcellular location is the cytoplasm. The protein resides in the nucleus. It is found in the membrane. The protein localises to the cell membrane. Functionally, component of the beta-catenin destruction complex required for regulating ctnnb1 levels through phosphorylation and ubiquitination, and modulating Wnt-signaling. Controls dorsoventral patterning via two opposing effects; down-regulates ctnnb1 to inhibit the Wnt signaling pathway and ventralize embryos, but also dorsalizes embryos by activating a Wnt-independent JNK signaling pathway. The sequence is that of Axin-1 (axin1) from Xenopus laevis (African clawed frog).